We begin with the raw amino-acid sequence, 279 residues long: Movement protein (279 aa).

Positions 246 to 279 (SESEDLNVESPPAAIGSSSASRSEAFRPQVVNGL) are disordered. Positions 254–268 (ESPPAAIGSSSASRS) are enriched in low complexity.

The protein belongs to the cucumovirus movement protein family.

The protein resides in the host cell junction. The protein localises to the host plasmodesma. Its function is as follows. Transports viral genome to neighboring plant cells directly through plasmosdesmata, without any budding. The movement protein allows efficient cell to cell propagation, by bypassing the host cell wall barrier. Acts by forming a tubular structure at the host plasmodesmata, enlarging it enough to allow free passage of virion capsids. This is Movement protein from Cucurbita pepo (Vegetable marrow).